The chain runs to 428 residues: Chaperone SurA (428 aa).

Positions 1-20 (MKNWKTLLLGIAMIANTSFA) are cleaved as a signal peptide. PpiC domains are found at residues 171–272 (STEL…KVND) and 282–382 (VTEV…ELLD).

It is found in the periplasm. The catalysed reaction is [protein]-peptidylproline (omega=180) = [protein]-peptidylproline (omega=0). Chaperone involved in the correct folding and assembly of outer membrane proteins. Recognizes specific patterns of aromatic residues and the orientation of their side chains, which are found more frequently in integral outer membrane proteins. May act in both early periplasmic and late outer membrane-associated steps of protein maturation. The chain is Chaperone SurA from Shigella dysenteriae serotype 1 (strain Sd197).